The following is a 171-amino-acid chain: Cytochrome c oxidase subunit 4 isoform 2, mitochondrial (171 aa).

A mitochondrion-targeting transit peptide spans 1 to 28 (MLPRAAWSLVLRKGGGGRRGMHSSEGTT). Residues 13-32 (KGGGGRRGMHSSEGTTRGGG) form a disordered region. The Mitochondrial matrix portion of the chain corresponds to 29–100 (RGGGKMSPYT…TFAEMNRRSN (72 aa)). The chain crosses the membrane as a helical span at residues 101–126 (EWKTVMGCVFFFIGFAALVIWWQRVY). The Mitochondrial intermembrane portion of the chain corresponds to 127-171 (VFPPKPITLTDERKAQQLQRMLDMKVNPVQGLASRWDYEKKQWKK).

Belongs to the cytochrome c oxidase IV family. Component of the cytochrome c oxidase (complex IV, CIV), a multisubunit enzyme composed of 14 subunits. The complex is composed of a catalytic core of 3 subunits MT-CO1, MT-CO2 and MT-CO3, encoded in the mitochondrial DNA, and 11 supernumerary subunits COX4I1 (or COX4I2), COX5A, COX5B, COX6A1 (or COX6A2), COX6B1 (or COX6B2), COX6C, COX7A2 (or COX7A1), COX7B, COX7C, COX8A and NDUFA4, which are encoded in the nuclear genome. The complex exists as a monomer or a dimer and forms supercomplexes (SCs) in the inner mitochondrial membrane with NADH-ubiquinone oxidoreductase (complex I, CI) and ubiquinol-cytochrome c oxidoreductase (cytochrome b-c1 complex, complex III, CIII), resulting in different assemblies (supercomplex SCI(1)III(2)IV(1) and megacomplex MCI(2)III(2)IV(2)). As to expression, highly expressed in lung.

Its subcellular location is the mitochondrion inner membrane. It functions in the pathway energy metabolism; oxidative phosphorylation. Functionally, component of the cytochrome c oxidase, the last enzyme in the mitochondrial electron transport chain which drives oxidative phosphorylation. The respiratory chain contains 3 multisubunit complexes succinate dehydrogenase (complex II, CII), ubiquinol-cytochrome c oxidoreductase (cytochrome b-c1 complex, complex III, CIII) and cytochrome c oxidase (complex IV, CIV), that cooperate to transfer electrons derived from NADH and succinate to molecular oxygen, creating an electrochemical gradient over the inner membrane that drives transmembrane transport and the ATP synthase. Cytochrome c oxidase is the component of the respiratory chain that catalyzes the reduction of oxygen to water. Electrons originating from reduced cytochrome c in the intermembrane space (IMS) are transferred via the dinuclear copper A center (CU(A)) of subunit 2 and heme A of subunit 1 to the active site in subunit 1, a binuclear center (BNC) formed by heme A3 and copper B (CU(B)). The BNC reduces molecular oxygen to 2 water molecules using 4 electrons from cytochrome c in the IMS and 4 protons from the mitochondrial matrix. The protein is Cytochrome c oxidase subunit 4 isoform 2, mitochondrial of Homo sapiens (Human).